A 238-amino-acid polypeptide reads, in one-letter code: tRNA (guanine-N(7)-)-methyltransferase (238 aa).

Residues Glu-70, Asp-95, Asp-122, and Asp-145 each coordinate S-adenosyl-L-methionine. Residue Asp-145 is part of the active site. Residues Lys-149, Asp-181, and 216–219 each bind substrate; that span reads TKFE.

Belongs to the class I-like SAM-binding methyltransferase superfamily. TrmB family.

It catalyses the reaction guanosine(46) in tRNA + S-adenosyl-L-methionine = N(7)-methylguanosine(46) in tRNA + S-adenosyl-L-homocysteine. The protein operates within tRNA modification; N(7)-methylguanine-tRNA biosynthesis. Catalyzes the formation of N(7)-methylguanine at position 46 (m7G46) in tRNA. This Neisseria meningitidis serogroup A / serotype 4A (strain DSM 15465 / Z2491) protein is tRNA (guanine-N(7)-)-methyltransferase.